The sequence spans 466 residues: L-seryl-tRNA(Sec) selenium transferase (466 aa).

K292 bears the N6-(pyridoxal phosphate)lysine mark.

It belongs to the SelA family. Pyridoxal 5'-phosphate serves as cofactor.

The protein resides in the cytoplasm. It catalyses the reaction L-seryl-tRNA(Sec) + selenophosphate + H(+) = L-selenocysteinyl-tRNA(Sec) + phosphate. Its pathway is aminoacyl-tRNA biosynthesis; selenocysteinyl-tRNA(Sec) biosynthesis; selenocysteinyl-tRNA(Sec) from L-seryl-tRNA(Sec) (bacterial route): step 1/1. Functionally, converts seryl-tRNA(Sec) to selenocysteinyl-tRNA(Sec) required for selenoprotein biosynthesis. The chain is L-seryl-tRNA(Sec) selenium transferase from Rhizobium meliloti (strain 1021) (Ensifer meliloti).